The chain runs to 143 residues: MARVMTRGMARVSTLATVRVSTLARARFSVRDSFMVSVIVGVRVRVDVLVRVNVLVRARPRVRVRARPRVRVRVRARPRVRVRVRASPRVRVRVITPPFFSPPGGFDVIFKTRGIPSPGETVLDKKVSRPWRGLTSRRGATMI.

A signal peptide spans 1–26; it reads MARVMTRGMARVSTLATVRVSTLARA.

In Human herpesvirus 6A (strain Uganda-1102) (HHV-6 variant A), this protein is Protein RJ1 (RJ1).